The primary structure comprises 198 residues: FMN-dependent NADH:quinone oxidoreductase (198 aa).

Residues serine 10, 16 to 18 (SQS), 94 to 97 (MYNF), and 138 to 141 (TRGG) each bind FMN.

This sequence belongs to the azoreductase type 1 family. As to quaternary structure, homodimer. FMN serves as cofactor.

It catalyses the reaction 2 a quinone + NADH + H(+) = 2 a 1,4-benzosemiquinone + NAD(+). The catalysed reaction is N,N-dimethyl-1,4-phenylenediamine + anthranilate + 2 NAD(+) = 2-(4-dimethylaminophenyl)diazenylbenzoate + 2 NADH + 2 H(+). Quinone reductase that provides resistance to thiol-specific stress caused by electrophilic quinones. Its function is as follows. Also exhibits azoreductase activity. Catalyzes the reductive cleavage of the azo bond in aromatic azo compounds to the corresponding amines. The sequence is that of FMN-dependent NADH:quinone oxidoreductase from Shewanella putrefaciens (strain CN-32 / ATCC BAA-453).